A 588-amino-acid chain; its full sequence is Oxidoreductase NdmD (588 aa).

Positions 9–114 constitute a Rieske domain; that stretch reads WFPIATTEDL…VREKHGFIWT (106 aa). Residues Cys50, His52, Cys69, and His72 each contribute to the [2Fe-2S] cluster site. The 102-residue stretch at 272-373 folds into the FAD-binding FR-type domain; the sequence is PTHYICEVVT…TLPRNGFPLV (102 aa). One can recognise a 2Fe-2S ferredoxin-type domain in the interval 503–588; it reads YEVELKKTGQ…CKSKKIVLDL (86 aa). Residues Cys537, Cys542, Cys545, and Cys575 each contribute to the [2Fe-2S] cluster site.

Requires [2Fe-2S] cluster as cofactor.

Its function is as follows. Involved in the caffeine degradation, which is the essential first step for assimilating the carbon and nitrogen in caffeine. Catalyzes the oxidation of NADH and transfers electrons to NdmA and NdmB, which catalyze the N-demethylation reactions. In Pseudomonas putida (Arthrobacter siderocapsulatus), this protein is Oxidoreductase NdmD (ndmD).